The primary structure comprises 96 residues: Non-specific lipid-transfer protein 2G (96 aa).

The signal sequence occupies residues 1-29; it reads MAGMMKKQVVTALMLALVVLAAAPGGARA. Intrachain disulfides connect Cys31/Cys63, Cys39/Cys53, Cys54/Cys89, and Cys65/Cys96.

The protein resides in the secreted. It localises to the cell wall. Functionally, transfer lipids across membranes. May play a role in plant defense or in the biosynthesis of cuticle layers. The protein is Non-specific lipid-transfer protein 2G of Triticum aestivum (Wheat).